Here is a 176-residue protein sequence, read N- to C-terminus: Imidazoleglycerol-phosphate dehydratase (176 aa).

This sequence belongs to the imidazoleglycerol-phosphate dehydratase family.

It is found in the cytoplasm. The enzyme catalyses D-erythro-1-(imidazol-4-yl)glycerol 3-phosphate = 3-(imidazol-4-yl)-2-oxopropyl phosphate + H2O. It functions in the pathway amino-acid biosynthesis; L-histidine biosynthesis; L-histidine from 5-phospho-alpha-D-ribose 1-diphosphate: step 6/9. The polypeptide is Imidazoleglycerol-phosphate dehydratase (Pyrococcus furiosus (strain ATCC 43587 / DSM 3638 / JCM 8422 / Vc1)).